Consider the following 618-residue polypeptide: DNA mismatch repair protein MutL (618 aa).

The protein belongs to the DNA mismatch repair MutL/HexB family.

Its function is as follows. This protein is involved in the repair of mismatches in DNA. It is required for dam-dependent methyl-directed DNA mismatch repair. May act as a 'molecular matchmaker', a protein that promotes the formation of a stable complex between two or more DNA-binding proteins in an ATP-dependent manner without itself being part of a final effector complex. The sequence is that of DNA mismatch repair protein MutL from Porphyromonas gingivalis (strain ATCC 33277 / DSM 20709 / CIP 103683 / JCM 12257 / NCTC 11834 / 2561).